The primary structure comprises 144 residues: Maximins 3/H5 (144 aa).

A signal peptide spans 1 to 18; the sequence is MNFKYIFAVSFLIASAYA. Propeptides lie at residues 19-43 and 74-123; these read RSVQNDEQSLSQRDVLEEESLREIR and TAEE…KEKR. Leu143 is modified (leucine amide).

The protein belongs to the bombinin family. In terms of tissue distribution, expressed by the skin glands.

The protein resides in the secreted. Maximin-3 shows antibacterial activity against both Gram-positive and Gram-negative bacteria. It also shows antimicrobial activity against the fungus C.albicans, but not against A.flavus nor P.uticale. It has little hemolytic activity. It possess a significant cytotoxicity against tumor cell lines. It possess a significant anti-HIV activity. It shows high spermicidal activity. Its function is as follows. Maximin-H5 shows antibacterial activity only against the Gram-positive bacteria S.aureus. The other bacterial and fungal strains tested were resistant to it. The presence of metal ions, like Zn(2+) and Mg(2+), did not increase its antimicrobial potency. Does not show hemolytic activity (in a concentration up to 80 uM). This is Maximins 3/H5 from Bombina maxima (Giant fire-bellied toad).